The primary structure comprises 557 residues: Dihydroxy-acid dehydratase (557 aa).

Residue D78 participates in Mg(2+) binding. A [2Fe-2S] cluster-binding site is contributed by C119. Mg(2+)-binding residues include D120 and K121. The residue at position 121 (K121) is an N6-carboxylysine. C192 provides a ligand contact to [2Fe-2S] cluster. E442 is a Mg(2+) binding site. The active-site Proton acceptor is S468.

The protein belongs to the IlvD/Edd family. Homodimer. [2Fe-2S] cluster serves as cofactor. The cofactor is Mg(2+).

The catalysed reaction is (2R)-2,3-dihydroxy-3-methylbutanoate = 3-methyl-2-oxobutanoate + H2O. It carries out the reaction (2R,3R)-2,3-dihydroxy-3-methylpentanoate = (S)-3-methyl-2-oxopentanoate + H2O. It participates in amino-acid biosynthesis; L-isoleucine biosynthesis; L-isoleucine from 2-oxobutanoate: step 3/4. It functions in the pathway amino-acid biosynthesis; L-valine biosynthesis; L-valine from pyruvate: step 3/4. In terms of biological role, functions in the biosynthesis of branched-chain amino acids. Catalyzes the dehydration of (2R,3R)-2,3-dihydroxy-3-methylpentanoate (2,3-dihydroxy-3-methylvalerate) into 2-oxo-3-methylpentanoate (2-oxo-3-methylvalerate) and of (2R)-2,3-dihydroxy-3-methylbutanoate (2,3-dihydroxyisovalerate) into 2-oxo-3-methylbutanoate (2-oxoisovalerate), the penultimate precursor to L-isoleucine and L-valine, respectively. The protein is Dihydroxy-acid dehydratase of Bacillus cereus (strain ZK / E33L).